The primary structure comprises 88 residues: Small ribosomal subunit protein bS16 (88 aa).

This sequence belongs to the bacterial ribosomal protein bS16 family.

The sequence is that of Small ribosomal subunit protein bS16 from Halothermothrix orenii (strain H 168 / OCM 544 / DSM 9562).